The following is a 244-amino-acid chain: Acetoacetate decarboxylase (244 aa).

Lys115 (schiff-base intermediate with acetoacetate) is an active-site residue.

It belongs to the ADC family. As to quaternary structure, homododecamer.

The catalysed reaction is acetoacetate + H(+) = acetone + CO2. Functionally, catalyzes the conversion of acetoacetate to acetone and carbon dioxide. The chain is Acetoacetate decarboxylase from Clostridium acetobutylicum (strain ATCC 824 / DSM 792 / JCM 1419 / IAM 19013 / LMG 5710 / NBRC 13948 / NRRL B-527 / VKM B-1787 / 2291 / W).